The sequence spans 310 residues: AMMECR1-like protein (310 aa).

A disordered region spans residues 26-95 (LSGSGTHSHG…LSPLPRPNGT (70 aa)). A compositionally biased stretch (polar residues) spans 28-66 (GSGTHSHGNQSTTVPGSSSGPLQNHQHVDSSSGRENVSD). Ser-74 is modified (phosphoserine). The region spanning 97–291 (NTTKNLVVTA…ISYAEYIASR (195 aa)) is the AMMECR1 domain.

The sequence is that of AMMECR1-like protein (AMMECR1L) from Homo sapiens (Human).